A 247-amino-acid polypeptide reads, in one-letter code: 1-(5-phosphoribosyl)-5-[(5-phosphoribosylamino)methylideneamino] imidazole-4-carboxamide isomerase (247 aa).

The Proton acceptor role is filled by Asp-8. The active-site Proton donor is Asp-131.

Belongs to the HisA/HisF family.

Its subcellular location is the cytoplasm. It catalyses the reaction 1-(5-phospho-beta-D-ribosyl)-5-[(5-phospho-beta-D-ribosylamino)methylideneamino]imidazole-4-carboxamide = 5-[(5-phospho-1-deoxy-D-ribulos-1-ylimino)methylamino]-1-(5-phospho-beta-D-ribosyl)imidazole-4-carboxamide. The protein operates within amino-acid biosynthesis; L-histidine biosynthesis; L-histidine from 5-phospho-alpha-D-ribose 1-diphosphate: step 4/9. This is 1-(5-phosphoribosyl)-5-[(5-phosphoribosylamino)methylideneamino] imidazole-4-carboxamide isomerase from Ralstonia pickettii (strain 12J).